We begin with the raw amino-acid sequence, 67 residues long: Theromin (67 aa).

Residues 2–27 (CENTECPRACPGEYEFDEDGCNTCVC) enclose the Antistasin-like domain.

Homodimer. Post-translationally, eight disulfide bonds are present.

Its subcellular location is the secreted. In terms of biological role, potent thrombin-specific inhibitor. The polypeptide is Theromin (Theromyzon tessulatum (Duck leech)).